We begin with the raw amino-acid sequence, 346 residues long: MSQTESAAFLAGYPLKAHNTFGFDVRARFACRIEQEAQLMPAVRDPRAAGLPRLVLGGGSNVVLTGDFGGLVLLVALRGRRVVREDNDAWYVEAAGGEPWHEFVGWTLSQGMAGLENLALIPGTVGAAPIQNIGAYGLEMCERFASLRAVELTTGAVVELDAQACRFGYRDSFFKREGRDRFVITSVTFRLPKVWQPRAGYADLARELAANGHAGTPPTAQAIFDAVVAVRRAKLPDPLELGNAGSFFKNPVIGPAQFEALKLREPDVVSYVQADGRVKLAAGWLIDRCGWKGRAMGAAAVHERQALVLVNRGGASGAEVLALAKAIQRDVRERFGVELEPEPVCL.

One can recognise an FAD-binding PCMH-type domain in the interval G22–V194. The active site involves R170. S246 functions as the Proton donor in the catalytic mechanism. Residue E342 is part of the active site.

The protein belongs to the MurB family. FAD serves as cofactor.

The protein localises to the cytoplasm. It carries out the reaction UDP-N-acetyl-alpha-D-muramate + NADP(+) = UDP-N-acetyl-3-O-(1-carboxyvinyl)-alpha-D-glucosamine + NADPH + H(+). The protein operates within cell wall biogenesis; peptidoglycan biosynthesis. Cell wall formation. In Paraburkholderia xenovorans (strain LB400), this protein is UDP-N-acetylenolpyruvoylglucosamine reductase.